Here is a 227-residue protein sequence, read N- to C-terminus: Cytochrome c oxidase subunit 2 (227 aa).

Over 1-14 the chain is Mitochondrial intermembrane; that stretch reads MAYPFQLGLQDATS. The helical transmembrane segment at 15-45 threads the bilayer; it reads PIMEELLHFHDHTLMIVFLISSLVLYIISLM. The Mitochondrial matrix portion of the chain corresponds to 46–59; that stretch reads LTTKLTHTSTMDAQ. A helical transmembrane segment spans residues 60 to 87; it reads EVETVWTILPAIILILIALPSLRILYMM. At 88–227 the chain is on the mitochondrial intermembrane side; sequence DEINNPSLTV…YFETWSALMV (140 aa). H161, C196, E198, C200, H204, and M207 together coordinate Cu cation. E198 contributes to the Mg(2+) binding site. The residue at position 218 (Y218) is a Phosphotyrosine.

It belongs to the cytochrome c oxidase subunit 2 family. Component of the cytochrome c oxidase (complex IV, CIV), a multisubunit enzyme composed of 14 subunits. The complex is composed of a catalytic core of 3 subunits MT-CO1, MT-CO2 and MT-CO3, encoded in the mitochondrial DNA, and 11 supernumerary subunits COX4I, COX5A, COX5B, COX6A, COX6B, COX6C, COX7A, COX7B, COX7C, COX8 and NDUFA4, which are encoded in the nuclear genome. The complex exists as a monomer or a dimer and forms supercomplexes (SCs) in the inner mitochondrial membrane with NADH-ubiquinone oxidoreductase (complex I, CI) and ubiquinol-cytochrome c oxidoreductase (cytochrome b-c1 complex, complex III, CIII), resulting in different assemblies (supercomplex SCI(1)III(2)IV(1) and megacomplex MCI(2)III(2)IV(2)). Found in a complex with TMEM177, COA6, COX18, COX20, SCO1 and SCO2. Interacts with TMEM177 in a COX20-dependent manner. Interacts with COX20. Interacts with COX16. It depends on Cu cation as a cofactor.

It is found in the mitochondrion inner membrane. It carries out the reaction 4 Fe(II)-[cytochrome c] + O2 + 8 H(+)(in) = 4 Fe(III)-[cytochrome c] + 2 H2O + 4 H(+)(out). Component of the cytochrome c oxidase, the last enzyme in the mitochondrial electron transport chain which drives oxidative phosphorylation. The respiratory chain contains 3 multisubunit complexes succinate dehydrogenase (complex II, CII), ubiquinol-cytochrome c oxidoreductase (cytochrome b-c1 complex, complex III, CIII) and cytochrome c oxidase (complex IV, CIV), that cooperate to transfer electrons derived from NADH and succinate to molecular oxygen, creating an electrochemical gradient over the inner membrane that drives transmembrane transport and the ATP synthase. Cytochrome c oxidase is the component of the respiratory chain that catalyzes the reduction of oxygen to water. Electrons originating from reduced cytochrome c in the intermembrane space (IMS) are transferred via the dinuclear copper A center (CU(A)) of subunit 2 and heme A of subunit 1 to the active site in subunit 1, a binuclear center (BNC) formed by heme A3 and copper B (CU(B)). The BNC reduces molecular oxygen to 2 water molecules using 4 electrons from cytochrome c in the IMS and 4 protons from the mitochondrial matrix. The sequence is that of Cytochrome c oxidase subunit 2 (MT-CO2) from Canis lupus familiaris (Dog).